Here is a 229-residue protein sequence, read N- to C-terminus: Translin (229 aa).

The tract at residues 86–90 (RFHEH) is DNA/RNA binding. A leucine-zipper region spans residues 177–198 (LDSGFRLLNLKNDSLRKRYDGL).

Belongs to the translin family. Ring-shaped heterooctamer of six TSN and two TSNAX subunits, DNA/RNA binding occurs inside the ring.

It is found in the cytoplasm. The protein resides in the nucleus. Functionally, exhibits both single-stranded and double-stranded endoribonuclease activity. May act as an activator of RNA-induced silencing complex (RISC) by facilitating endonucleolytic cleavage of the siRNA passenger strand. Its function is as follows. DNA-binding protein that specifically recognizes consensus sequences at the breakpoint junctions in chromosomal translocations, mostly involving immunoglobulin (Ig)/T-cell receptor gene segments. Seems to recognize single-stranded DNA ends generated by staggered breaks occurring at recombination hot spots. In Gallus gallus (Chicken), this protein is Translin (TSN).